The following is a 113-amino-acid chain: uncharacterized protein (113 aa).

The tract at residues C28–E55 is disordered.

This is an uncharacterized protein from Human cytomegalovirus (strain AD169) (HHV-5).